A 645-amino-acid polypeptide reads, in one-letter code: 1-deoxy-D-xylulose-5-phosphate synthase (645 aa).

Thiamine diphosphate-binding positions include His83 and 124–126 (GHS). Asp155 lines the Mg(2+) pocket. Thiamine diphosphate contacts are provided by residues 156-157 (GS), Asn184, Tyr295, and Glu376. A Mg(2+)-binding site is contributed by Asn184.

It belongs to the transketolase family. DXPS subfamily. As to quaternary structure, homodimer. It depends on Mg(2+) as a cofactor. Thiamine diphosphate serves as cofactor.

It catalyses the reaction D-glyceraldehyde 3-phosphate + pyruvate + H(+) = 1-deoxy-D-xylulose 5-phosphate + CO2. Its pathway is metabolic intermediate biosynthesis; 1-deoxy-D-xylulose 5-phosphate biosynthesis; 1-deoxy-D-xylulose 5-phosphate from D-glyceraldehyde 3-phosphate and pyruvate: step 1/1. Catalyzes the acyloin condensation reaction between C atoms 2 and 3 of pyruvate and glyceraldehyde 3-phosphate to yield 1-deoxy-D-xylulose-5-phosphate (DXP). In Desulfotalea psychrophila (strain LSv54 / DSM 12343), this protein is 1-deoxy-D-xylulose-5-phosphate synthase.